Consider the following 105-residue polypeptide: MDVLHRLAEILEQRKTEAPDKSYAASLYAKGLDTILKKIGEEATETVIAAKDGEPGKIVYEMADLWFHCCVLLAQQGLGPDDVLRELGRRFGMSGLEEKASRKLG.

This sequence belongs to the PRA-PH family.

It localises to the cytoplasm. It carries out the reaction 1-(5-phospho-beta-D-ribosyl)-ATP + H2O = 1-(5-phospho-beta-D-ribosyl)-5'-AMP + diphosphate + H(+). It participates in amino-acid biosynthesis; L-histidine biosynthesis; L-histidine from 5-phospho-alpha-D-ribose 1-diphosphate: step 2/9. The chain is Phosphoribosyl-ATP pyrophosphatase from Methylococcus capsulatus (strain ATCC 33009 / NCIMB 11132 / Bath).